The chain runs to 535 residues: Formate--tetrahydrofolate ligase (535 aa).

50 to 57 is a binding site for ATP; that stretch reads TPAGEGKT.

This sequence belongs to the formate--tetrahydrofolate ligase family.

The catalysed reaction is (6S)-5,6,7,8-tetrahydrofolate + formate + ATP = (6R)-10-formyltetrahydrofolate + ADP + phosphate. The protein operates within one-carbon metabolism; tetrahydrofolate interconversion. This is Formate--tetrahydrofolate ligase from Picrophilus torridus (strain ATCC 700027 / DSM 9790 / JCM 10055 / NBRC 100828 / KAW 2/3).